We begin with the raw amino-acid sequence, 266 residues long: Interleukin-1 beta (266 aa).

A propeptide spanning residues methionine 1 to aspartate 113 is cleaved from the precursor.

This sequence belongs to the IL-1 family. Monomer. In its precursor form, weakly interacts with full-length MEFV; the mature cytokine does not interact at all. Interacts with integrins ITGAV:ITGBV and ITGA5:ITGB1; integrin-binding is required for IL1B signaling. Interacts with cargo receptor TMED10; the interaction is direct and is required for the secretion of IL1B mature form. Interacts with HSP90AB1; the interaction facilitates cargo translocation into the ERGIC. Interacts with HSP90B1; the interaction facilitates cargo translocation into the ERGIC.

It is found in the cytoplasm. It localises to the cytosol. Its subcellular location is the secreted. The protein localises to the lysosome. The protein resides in the extracellular exosome. Its function is as follows. Potent pro-inflammatory cytokine. Initially discovered as the major endogenous pyrogen, induces prostaglandin synthesis, neutrophil influx and activation, T-cell activation and cytokine production, B-cell activation and antibody production, and fibroblast proliferation and collagen production. Promotes Th17 differentiation of T-cells. Synergizes with IL12/interleukin-12 to induce IFNG synthesis from T-helper 1 (Th1) cells. Plays a role in angiogenesis by inducing VEGF production synergistically with TNF and IL6. Involved in transduction of inflammation downstream of pyroptosis: its mature form is specifically released in the extracellular milieu by passing through the gasdermin-D (GSDMD) pore. This is Interleukin-1 beta (IL1B) from Ovis aries (Sheep).